Consider the following 310-residue polypeptide: tRNA dimethylallyltransferase (310 aa).

Residue 10–17 coordinates ATP; the sequence is GPTAVGKS. 12–17 lines the substrate pocket; sequence TAVGKS. Interaction with substrate tRNA regions lie at residues 35–38, 159–163, and 274–281; these read DSAQ, QRIQR, and KRQITWLR.

Belongs to the IPP transferase family. In terms of assembly, monomer. Mg(2+) is required as a cofactor.

The catalysed reaction is adenosine(37) in tRNA + dimethylallyl diphosphate = N(6)-dimethylallyladenosine(37) in tRNA + diphosphate. Its function is as follows. Catalyzes the transfer of a dimethylallyl group onto the adenine at position 37 in tRNAs that read codons beginning with uridine, leading to the formation of N6-(dimethylallyl)adenosine (i(6)A). This Halorhodospira halophila (strain DSM 244 / SL1) (Ectothiorhodospira halophila (strain DSM 244 / SL1)) protein is tRNA dimethylallyltransferase.